The sequence spans 2278 residues: Protein Ycf2 (2278 aa).

The protein belongs to the Ycf2 family.

The protein resides in the plastid. Its subcellular location is the chloroplast stroma. It is found in the chromoplast stroma. Functionally, probable ATPase of unknown function. Its presence in a non-photosynthetic plant (Epifagus virginiana) and experiments in tobacco indicate that it has an essential function which is probably not related to photosynthesis. This chain is Protein Ycf2 (ycf2-A), found in Solanum lycopersicum (Tomato).